A 156-amino-acid polypeptide reads, in one-letter code: VapC ribonuclease AF_1683 (156 aa).

The 122-residue stretch at L4–S125 folds into the PINc domain. Mg(2+) contacts are provided by D6 and D103.

Belongs to the PINc/VapC protein family. The cofactor is Mg(2+).

In terms of biological role, toxic component of a type II toxin-antitoxin (TA) system. An RNase. This Archaeoglobus fulgidus (strain ATCC 49558 / DSM 4304 / JCM 9628 / NBRC 100126 / VC-16) protein is VapC ribonuclease AF_1683.